Reading from the N-terminus, the 343-residue chain is Anthranilate phosphoribosyltransferase (343 aa).

5-phospho-alpha-D-ribose 1-diphosphate contacts are provided by residues glycine 77, 80 to 81 (GD), threonine 85, 87 to 90 (NVST), 105 to 113 (KHGNRSSSG), and serine 117. Glycine 77 serves as a coordination point for anthranilate. Serine 89 provides a ligand contact to Mg(2+). Anthranilate is bound at residue asparagine 108. Arginine 163 contacts anthranilate. Residues aspartate 222 and glutamate 223 each coordinate Mg(2+).

Belongs to the anthranilate phosphoribosyltransferase family. In terms of assembly, homodimer. Mg(2+) is required as a cofactor.

It catalyses the reaction N-(5-phospho-beta-D-ribosyl)anthranilate + diphosphate = 5-phospho-alpha-D-ribose 1-diphosphate + anthranilate. It participates in amino-acid biosynthesis; L-tryptophan biosynthesis; L-tryptophan from chorismate: step 2/5. Catalyzes the transfer of the phosphoribosyl group of 5-phosphorylribose-1-pyrophosphate (PRPP) to anthranilate to yield N-(5'-phosphoribosyl)-anthranilate (PRA). In Cenarchaeum symbiosum (strain A), this protein is Anthranilate phosphoribosyltransferase.